A 1732-amino-acid chain; its full sequence is Transient receptor potential cation channel subfamily M member 3 (1732 aa).

The Cytoplasmic segment spans residues 1-894 (MPEPWGTVYF…RKIYEFYNAP (894 aa)). Calmodulin-binding regions lie at residues 192 to 215 (NFELQPKLKQVFGKGLIKAAMTTG), 300 to 323 (TGKYGAEVKLRRQLEKHISLQKIN), 601 to 624 (RKRFRTLYHNLFGPKRPKALKLLG), and 793 to 816 (RKNSGLKVILGILLPPSILSLEFK). Residues 617–625 (PKALKLLGM) are required for the inhibitory action of G-beta/gamma-subunits of heterotrimeric G-proteins. Ser796 is a binding site for 1,2-dioctanoyl-sn-glycero-3-phospho-(1D-myo-inositol-4,5-bisphosphate). A helical transmembrane segment spans residues 895 to 918 (IVKFWFYTLAYIGYLMLFNYIVLV). Residues 919-925 (KMERWPS) are Extracellular-facing. The chain crosses the membrane as a helical span at residues 926–948 (TQEWIVISYIFTLGIEKMREILM). Residues 949-964 (SEPGKLLQKVKVWLQE) are Cytoplasmic-facing. A helical transmembrane segment spans residues 965-985 (YWNVTDLIAILLFSVGMILRL). Residues 986-989 (QDQP) lie on the Extracellular side of the membrane. A helical membrane pass occupies residues 990–1013 (FRSDGRVIYCVNIIYWYIRLLDIF). Over 1014–1028 (GVNKYLGPYVMMIGK) the chain is Cytoplasmic. Lys1017 and Tyr1018 together coordinate 1,2-dioctanoyl-sn-glycero-3-phospho-(1D-myo-inositol-4,5-bisphosphate). A helical membrane pass occupies residues 1029–1056 (MMIDMMYFVIIMLVVLMSFGVARQAILF). Residues 1057–1111 (PNEEPSWKLAKNIFYMPYWMIYGEVFADQIDPPCGQNETREDGKIIQLPPCKTGA) lie on the Extracellular side of the membrane. The chain crosses the membrane as a helical span at residues 1112-1137 (WIVPAIMACYLLVANILLVNLLIAVF). The Cytoplasmic segment spans residues 1138-1732 (NNTFFEVKSI…AFQSFESKHN (595 aa)). Positions 1241–1301 (ERIRVTSERV…LERLTGLERA (61 aa)) form a coiled coil. Over residues 1459–1476 (PVPSTAPSSSAYATLAPT) the composition is skewed to low complexity. Disordered regions lie at residues 1459 to 1478 (PVPSTAPSSSAYATLAPTDR) and 1611 to 1732 (REAE…SKHN). 3 stretches are compositionally biased toward polar residues: residues 1635–1653 (AISSQEGDNSERTLSNNIT), 1690–1701 (NTASLRNPFQRS), and 1720–1732 (RTSAFQSFESKHN).

This sequence belongs to the transient receptor (TC 1.A.4) family. LTrpC subfamily. TRPM3 sub-subfamily. In terms of assembly, homotetramer. Interacts with TRPM1; the interaction results in the formation of a heteromultimeric cation channel complex that are functionally different from the homomeric channels. As to expression, expressed primarily in the kidney and, at lower levels, in brain, testis, ovary, pancreas and spinal cord. Expression in the brain and kidney was determined at protein level. In the kidney, expressed predominantly in the collecting tubular epithelium in the medulla, medullary rays, and periglomerular regions; in the brain, highest levels are found in the cerebellum, choroid plexus, the locus coeruleus, the posterior thalamus and the substantia nigra. Down-regulated in renal tumors compared to normal kidney. Expressed in the lens.

Its subcellular location is the cell membrane. It carries out the reaction Ca(2+)(in) = Ca(2+)(out). The enzyme catalyses Mn(2+)(in) = Mn(2+)(out). The catalysed reaction is Zn(2+)(in) = Zn(2+)(out). It catalyses the reaction Mg(2+)(in) = Mg(2+)(out). Its activity is regulated as follows. Activated by the neurosteroid pregnelonone sulfate (PregS); PregS activates the channel by shifting its current-voltage activation curve toward more negative membrane potentials and also potentiates temperature-induced activation. Activated by sphingosine. Activated by heat. Intracellular Ca(2+) inhibits TRPM3 probably via interaction with Ca(2+)/calmodulin. Intracellular Mg(2+) inhibits TRPM3 activity. Both intracellular and extracellular protons block TRPM3 through propable binding sites in the pore region. Positively regulated by phosphoinositide phosphoinositol 4,5-biphosphate (PI(4,5)P2). Strongly inhibited by activation of G(i)-coupled receptors via direct binding with G-betagamma-subunits of heterotrimeric G-proteins. Constitutively active, non-selective divalent cation-conducting channel that is permeable to Ca(2+), Mn(2+), and Mg(2+), with a high permeability for Ca(2+). However, can be enhanced by increasing temperature and by ligands, including the endogenous neurosteroid pregnenolone sulfate and sphingosine-1 and suppressed by intracellular Mg(2+). Implicated in a variety of cellular processes, including insulin/peptide secretion, vascular constriction and dilation, noxious heat sensing, inflammatory and spontaneous pain sensitivity. In neurons of the dorsal root ganglia, functions as thermosensitive channel for the detection of noxious heat and spontaneous pain. Suggested to function as an ionotropic steroid receptor in beta-cell, indeed pregnenolone sulfate leads to Ca(2+) influx and enhanced insulin secretion. Mediates Zn(2+) uptake into the lumen of pancreatic beta cell secretory granules, thereby regulating insulin secretion. Forms heteromultimeric ion channels with TRPM1 which are permeable for Ca(2+) and Zn(2+) ions. Exists as multiple splice variants which differ significantly in their biophysical properties. In Homo sapiens (Human), this protein is Transient receptor potential cation channel subfamily M member 3.